The following is a 917-amino-acid chain: Protein STE5 (917 aa).

2 disordered regions span residues 1–25 (MMET…YSGT) and 58–151 (FQRS…LSDN). Residues 16–25 (FGSSTQYSGT) are compositionally biased toward polar residues. Residues 69–84 (SPSPISSSTFSFSPKS) show a composition bias toward low complexity. 2 stretches are compositionally biased toward polar residues: residues 85–110 (RVTS…STDY) and 118–138 (TSSL…NLSR). Position 329 is a phosphoserine (S329). Residues 778–794 (HDDDDEEDNDDSTDNEL) show a composition bias toward acidic residues. The disordered stretch occupies residues 778–821 (HDDDDEEDNDDSTDNELDNSSGSLSDAESTTTIHIDSPFDNENA). Residues 799-821 (GSLSDAESTTTIHIDSPFDNENA) show a composition bias toward polar residues.

It to yeast FAR1. In terms of processing, may be regulated at the phosphorylation level, and by the mating type of the cell and depends on an intact pheromone-response pathway.

It is found in the cytoplasm. In terms of biological role, component of the pheromone signal transduction pathway. It mediates pheromone signals acting between STE20 and STE11. It is absolutely required for pheromone-induced transcription of FUS1. May play a role in cell-cycle arrest in response to pheromone. This is Protein STE5 (STE5) from Saccharomyces cerevisiae (strain ATCC 204508 / S288c) (Baker's yeast).